Here is a 384-residue protein sequence, read N- to C-terminus: Shufflon-specific DNA recombinase (384 aa).

The Core-binding (CB) domain occupies 9–96 (MSLSRALDKY…LLSSLFNIAR (88 aa)). The Tyr recombinase domain maps to 118 to 284 (GRDRRLTSSE…RAWQLVSKLD (167 aa)). Catalysis depends on residues R155, K180, H235, R238, and H262. The active-site O-(3'-phospho-DNA)-tyrosine intermediate is the Y271.

This sequence belongs to the 'phage' integrase family.

Its function is as follows. Shufflon-specific DNA recombinase. This is Shufflon-specific DNA recombinase (rci) from Escherichia coli.